A 276-amino-acid chain; its full sequence is Probable endonuclease 4 (276 aa).

Residues His67, His107, Glu142, Asp176, His179, His211, Asp224, His226, and Glu256 each coordinate Zn(2+).

Belongs to the AP endonuclease 2 family. Zn(2+) is required as a cofactor.

The catalysed reaction is Endonucleolytic cleavage to 5'-phosphooligonucleotide end-products.. Endonuclease IV plays a role in DNA repair. It cleaves phosphodiester bonds at apurinic or apyrimidinic (AP) sites, generating a 3'-hydroxyl group and a 5'-terminal sugar phosphate. This Methanosphaera stadtmanae (strain ATCC 43021 / DSM 3091 / JCM 11832 / MCB-3) protein is Probable endonuclease 4.